A 347-amino-acid chain; its full sequence is Phenylalanine--tRNA ligase alpha subunit (347 aa).

Residue glutamate 268 coordinates Mg(2+).

This sequence belongs to the class-II aminoacyl-tRNA synthetase family. Phe-tRNA synthetase alpha subunit type 1 subfamily. Tetramer of two alpha and two beta subunits. It depends on Mg(2+) as a cofactor.

It localises to the cytoplasm. The catalysed reaction is tRNA(Phe) + L-phenylalanine + ATP = L-phenylalanyl-tRNA(Phe) + AMP + diphosphate + H(+). This chain is Phenylalanine--tRNA ligase alpha subunit, found in Leptothrix cholodnii (strain ATCC 51168 / LMG 8142 / SP-6) (Leptothrix discophora (strain SP-6)).